A 1031-amino-acid polypeptide reads, in one-letter code: Beta-galactosidase (1031 aa).

Positions 98 and 197 each coordinate substrate. D197 lines the Na(+) pocket. E412, H414, and E457 together coordinate Mg(2+). Substrate is bound by residues E457 and 533-536; that span reads EYAH. E457 serves as the catalytic Proton donor. The Nucleophile role is filled by E533. N593 is a Mg(2+) binding site. Na(+) is bound by residues F597 and D600. Positions 600 and 1005 each coordinate substrate.

The protein belongs to the glycosyl hydrolase 2 family. In terms of assembly, homotetramer. The cofactor is Mg(2+). It depends on Na(+) as a cofactor.

The catalysed reaction is Hydrolysis of terminal non-reducing beta-D-galactose residues in beta-D-galactosides.. The chain is Beta-galactosidase from Oenococcus oeni (strain ATCC BAA-331 / PSU-1).